Here is a 577-residue protein sequence, read N- to C-terminus: Arginine--tRNA ligase (577 aa).

Residues 122-132 (PNVAKEMHVGH) carry the 'HIGH' region motif.

Belongs to the class-I aminoacyl-tRNA synthetase family. In terms of assembly, monomer.

Its subcellular location is the cytoplasm. It carries out the reaction tRNA(Arg) + L-arginine + ATP = L-arginyl-tRNA(Arg) + AMP + diphosphate. The polypeptide is Arginine--tRNA ligase (argS) (Salmonella typhimurium (strain SL1344)).